A 158-amino-acid chain; its full sequence is Protein Smg homolog (158 aa).

It belongs to the Smg family.

The sequence is that of Protein Smg homolog from Coxiella burnetii (strain RSA 331 / Henzerling II).